Reading from the N-terminus, the 147-residue chain is UPF0735 ACT domain-containing protein RBAM_024960 (147 aa).

The ACT domain maps to 70–145; it reads TLFFHLEDRS…FIEKVEILGS (76 aa).

The protein belongs to the UPF0735 family.

The protein is UPF0735 ACT domain-containing protein RBAM_024960 of Bacillus velezensis (strain DSM 23117 / BGSC 10A6 / LMG 26770 / FZB42) (Bacillus amyloliquefaciens subsp. plantarum).